The primary structure comprises 744 residues: Catalase-peroxidase (744 aa).

The tryptophyl-tyrosyl-methioninium (Trp-Tyr) (with M-257) cross-link spans 108–231 (WHSAGTYRIS…LAAVQMGLIY (124 aa)). His-109 functions as the Proton acceptor in the catalytic mechanism. The segment at residues 231 to 257 (YVNPEGPNGNPDPIAAARDIRETFRRM) is a cross-link (tryptophyl-tyrosyl-methioninium (Tyr-Met) (with W-108)). Heme b is bound at residue His-272. The interval 353–372 (ANQWKPKDGAGAGTVPDAHD) is disordered.

The protein belongs to the peroxidase family. Peroxidase/catalase subfamily. In terms of assembly, homodimer or homotetramer. Requires heme b as cofactor. In terms of processing, formation of the three residue Trp-Tyr-Met cross-link is important for the catalase, but not the peroxidase activity of the enzyme.

The enzyme catalyses H2O2 + AH2 = A + 2 H2O. It carries out the reaction 2 H2O2 = O2 + 2 H2O. Functionally, bifunctional enzyme with both catalase and broad-spectrum peroxidase activity. This Frankia casuarinae (strain DSM 45818 / CECT 9043 / HFP020203 / CcI3) protein is Catalase-peroxidase.